A 213-amino-acid polypeptide reads, in one-letter code: LexA repressor (213 aa).

Residues 27–47 (QTEIARAFGFKGIRAAQYHLE) constitute a DNA-binding region (H-T-H motif). Active-site for autocatalytic cleavage activity residues include Ser-133 and Lys-170.

It belongs to the peptidase S24 family. Homodimer.

It carries out the reaction Hydrolysis of Ala-|-Gly bond in repressor LexA.. In terms of biological role, represses a number of genes involved in the response to DNA damage (SOS response), including recA and lexA. Has been shown to bind to the palindromic sequence 5'-CTG-N(8-12)-C-[TC]-G. In the presence of single-stranded DNA, RecA interacts with LexA causing an autocatalytic cleavage which disrupts the DNA-binding part of LexA, leading to derepression of the SOS regulon and eventually DNA repair. This Xanthomonas citri (Xanthomonas campestris pv. citri) protein is LexA repressor.